The primary structure comprises 51 residues: Large ribosomal subunit protein eL39 (51 aa).

The protein belongs to the eukaryotic ribosomal protein eL39 family. As to quaternary structure, interacts with YIH1.

In Kluyveromyces marxianus (Yeast), this protein is Large ribosomal subunit protein eL39 (RPL39).